We begin with the raw amino-acid sequence, 770 residues long: Potassium transporter 25 (770 aa).

Residues 1–23 (MDLEAAHGAAAAPGKRRRRARES) lie on the Cytoplasmic side of the membrane. A helical membrane pass occupies residues 24–44 (WGASLLLAYQSLGVVYGDVAT). The Extracellular segment spans residues 45-70 (SPLYVYKSAFAGDDIQHSAGNEEIYG). A helical membrane pass occupies residues 71-91 (VLSFVFWTLTLISLVKYVLIV). Residues 92-152 (LRADDGGEGG…MLERYRVLQR (61 aa)) are Cytoplasmic-facing. Residues 153-173 (LLLLFALLGTCMVIGDGVLTP) traverse the membrane as a helical segment. Residues 174-194 (AVSVYSAVSGLELSMEHEHHK) are Extracellular-facing. Residues 195–215 (YVQLPVTCAILIGLFALQHYG) traverse the membrane as a helical segment. At 216–218 (THR) the chain is on the cytoplasmic side. A helical membrane pass occupies residues 219–239 (VGFIFAPIVCVWLLCISAIGV). Topologically, residues 240 to 267 (YNIVHWNHHVYRALSPYYMYQFLKKTQT) are extracellular. The helical transmembrane segment at 268-288 (GGWMSLGGILLCVTGSEAMYA) threads the bilayer. At 289–299 (DLGHFSQSSIK) the chain is on the cytoplasmic side. The helical transmembrane segment at 300–320 (IAFMSVVYPALVLAYMGQAAY) threads the bilayer. Residues 321–346 (ISQHHSFENAYHIGFYVSVPEKLRWP) are Extracellular-facing. A helical membrane pass occupies residues 347–367 (VLVIAILAAVVGSQAVITGTF). The Cytoplasmic segment spans residues 368-394 (SIIKQCSSLSCFPGVKIVHTSSTVHGQ). Residues 395 to 415 (IYIPEINWILMILCLAVTLGF) traverse the membrane as a helical segment. Over 416 to 425 (RNTKHLANAQ) the chain is Extracellular. Residues 426–446 (GLAVITVMLVTTCLMSLVIVL) traverse the membrane as a helical segment. At 447–451 (CWNKS) the chain is on the cytoplasmic side. Residues 452–472 (IFLALGFLIFFGTIEVLYFSA) traverse the membrane as a helical segment. Over 473–479 (SLVKFHE) the chain is Extracellular. Residues 480-500 (GAWVPITLSFIFMIVMCVWHY) form a helical membrane-spanning segment. Residues 501–770 (GTIKKYEFDF…TLEVGMVYQV (270 aa)) lie on the Cytoplasmic side of the membrane.

The protein belongs to the HAK/KUP transporter (TC 2.A.72.3) family.

It is found in the membrane. In terms of biological role, high-affinity potassium transporter. This Oryza sativa subsp. japonica (Rice) protein is Potassium transporter 25 (HAK25).